The sequence spans 235 residues: Modulator of macroautophagy TMEM150B (235 aa).

Residues 1 to 8 (MWGYLSLL) lie on the Cytoplasmic side of the membrane. Residues 9 to 29 (PMCLAFWAIAGIWTVFSLAVV) traverse the membrane as a helical segment. The Extracellular portion of the chain corresponds to 30–51 (NKAVNLTDGFPYISVCGNVPPQ). Residue Asn34 is glycosylated (N-linked (GlcNAc...) asparagine). A helical membrane pass occupies residues 52-72 (SCIFSQVLNIGAASAAWICIL). The Cytoplasmic segment spans residues 73–88 (RYYQLRDWGVRKWHNQ). A helical transmembrane segment spans residues 89-109 (VILWTGLLCALGTSIVGNFQE). Topologically, residues 110-116 (KNQRATH) are extracellular. Residues 117–137 (LTGAFLAFFVGIVYFWLQLFL) form a helical membrane-spanning segment. Topologically, residues 138–156 (SWRMKNLPQPGAPWIGPLR) are cytoplasmic. The chain crosses the membrane as a helical span at residues 157 to 177 (LVLCSACFILEVAMVVLHSWS). The Extracellular segment spans residues 178–180 (MRS). A helical membrane pass occupies residues 181–201 (VSAICEWVAAMLLFILFGLLA). The Cytoplasmic segment spans residues 202-235 (VDFSRLDSCTLCLQPGSGSLRPPPDSPTSLHVQL).

This sequence belongs to the DRAM/TMEM150 family.

It is found in the cell membrane. It localises to the endosome membrane. The protein localises to the cytoplasmic vesicle. Its subcellular location is the autophagosome membrane. In terms of biological role, modulator of macroautophagy that causes accumulation of autophagosomes under basal conditions and enhances autophagic flux. Represses cell death and promotes long-term clonogenic survival of cells grown in the absence of glucose in a macroautophagy-independent manner. May have some role in extracellular matrix engulfment or growth factor receptor recycling, both of which can modulate cell survival. This is Modulator of macroautophagy TMEM150B from Bos taurus (Bovine).